A 414-amino-acid chain; its full sequence is 3-isopropylmalate dehydratase large subunit (414 aa).

Positions 295, 353, and 356 each coordinate [4Fe-4S] cluster.

It belongs to the aconitase/IPM isomerase family. LeuC type 2 subfamily. In terms of assembly, heterodimer of LeuC and LeuD. Requires [4Fe-4S] cluster as cofactor.

It carries out the reaction (2R,3S)-3-isopropylmalate = (2S)-2-isopropylmalate. Its pathway is amino-acid biosynthesis; L-leucine biosynthesis; L-leucine from 3-methyl-2-oxobutanoate: step 2/4. In terms of biological role, catalyzes the isomerization between 2-isopropylmalate and 3-isopropylmalate, via the formation of 2-isopropylmaleate. The polypeptide is 3-isopropylmalate dehydratase large subunit (Pyrobaculum islandicum (strain DSM 4184 / JCM 9189 / GEO3)).